The sequence spans 321 residues: Thioredoxin reductase (321 aa).

FAD contacts are provided by residues 11–14 (SGPA), 40–41 (TA), Gln45, Asn54, Cys145, Asp288, and 295–297 (RQA). A disulfide bridge connects residues Cys142 and Cys145.

It belongs to the class-II pyridine nucleotide-disulfide oxidoreductase family. Homodimer. The cofactor is FAD.

The protein resides in the cytoplasm. The enzyme catalyses [thioredoxin]-dithiol + NADP(+) = [thioredoxin]-disulfide + NADPH + H(+). The sequence is that of Thioredoxin reductase (TRR1) from Debaryomyces hansenii (strain ATCC 36239 / CBS 767 / BCRC 21394 / JCM 1990 / NBRC 0083 / IGC 2968) (Yeast).